A 356-amino-acid polypeptide reads, in one-letter code: tRNA N6-adenosine threonylcarbamoyltransferase (356 aa).

Fe cation contacts are provided by H131 and H135. Substrate is bound by residues 154 to 158 (LVSGG), D187, G200, and N289. D317 is a binding site for Fe cation.

Belongs to the KAE1 / TsaD family. Fe(2+) is required as a cofactor.

The protein resides in the cytoplasm. It catalyses the reaction L-threonylcarbamoyladenylate + adenosine(37) in tRNA = N(6)-L-threonylcarbamoyladenosine(37) in tRNA + AMP + H(+). In terms of biological role, required for the formation of a threonylcarbamoyl group on adenosine at position 37 (t(6)A37) in tRNAs that read codons beginning with adenine. Is involved in the transfer of the threonylcarbamoyl moiety of threonylcarbamoyl-AMP (TC-AMP) to the N6 group of A37, together with TsaE and TsaB. TsaD likely plays a direct catalytic role in this reaction. The chain is tRNA N6-adenosine threonylcarbamoyltransferase from Ruthia magnifica subsp. Calyptogena magnifica.